Reading from the N-terminus, the 501-residue chain is Solute carrier family 2, facilitated glucose transporter member 5 (501 aa).

Position 1 is an N-acetylmethionine (methionine 1). Residues 1–18 (MEPQDPVKREGRLTPVIV) are Cytoplasmic-facing. A helical transmembrane segment spans residues 19–39 (LATLIAAFGSSFQYGYNVATI). Residue tyrosine 32 coordinates D-fructose. Residues 40-68 (NSPSEFMKDFYNYTYYDRVGEYMNEFYLT) are Extracellular-facing. Residue asparagine 51 is glycosylated (N-linked (GlcNAc...) asparagine). Residues 69 to 91 (LLWSVTVSMFPFGGFLGSLMVGP) form a helical membrane-spanning segment. Residues 92 to 98 (LVNNLGR) are Cytoplasmic-facing. The chain crosses the membrane as a helical span at residues 99–119 (KGTLLFNNIFSIVPALLMGFS). Over 120–126 (DLAKSFE) the chain is Extracellular. A helical membrane pass occupies residues 127 to 149 (MIIVARVLVGICAGLSSNVVPMY). At 150 to 161 (LGELAPKNWRGA) the chain is on the cytoplasmic side. A helical transmembrane segment spans residues 162–182 (LGVVPQLFITIGILVAQIFGL). Glutamine 167 is a binding site for D-fructose. Topologically, residues 183–192 (RSLLANEEGW) are extracellular. The chain crosses the membrane as a helical span at residues 193–213 (PILLGLTGIPAVLQLLFLPFF). Over 214–277 (PESPRYLLIQ…LFKMRSLRWQ (64 aa)) the chain is Cytoplasmic. The helical transmembrane segment at 278–298 (VISIIVLMAGQQLSGVNAIYY) threads the bilayer. Residues glutamine 288 and 296 to 298 (IYY) each bind D-fructose. The Extracellular portion of the chain corresponds to 299–313 (YADQIYLSAGVKEDD). The chain crosses the membrane as a helical span at residues 314-334 (VQYVTAGTGAVNVLITVCAIF). Residues 335 to 342 (VVELMGRR) are Cytoplasmic-facing. Residues 343 to 363 (FLLLLGFSVCFTACCVLTGAL) traverse the membrane as a helical segment. At 364 to 371 (AMQDVISW) the chain is on the extracellular side. Residues 372–394 (MPYVSIACVISYVIGHALGPSPI) form a helical membrane-spanning segment. Residue histidine 387 participates in D-fructose binding. The Cytoplasmic segment spans residues 395–412 (PALLVTEIFLQSSRPAAY). The helical transmembrane segment at 413–433 (MVAGTVHWLSNFTVGLVFPFI) threads the bilayer. D-fructose is bound at residue 419–420 (HW). The Extracellular portion of the chain corresponds to 434–439 (QVGLGA). The chain crosses the membrane as a helical span at residues 440 to 460 (YSFVIFAVICFLTTVYIFLII). Residues 461–501 (PETKSKTFIEINQIFIKMNKVPGVHPEKEELKEFPPSTARQ) are Cytoplasmic-facing.

Belongs to the major facilitator superfamily. Sugar transporter (TC 2.A.1.1) family. Glucose transporter subfamily.

The protein localises to the apical cell membrane. It is found in the cell membrane. It localises to the sarcolemma. It carries out the reaction D-fructose(out) = D-fructose(in). Functionally, functions as a fructose transporter that has only low activity with other monosaccharides. Can mediate the uptake of deoxyglucose, but with low efficiency. Essential for fructose uptake in the small intestine. Plays a role in the regulation of salt uptake and blood pressure in response to dietary fructose. Required for the development of high blood pressure in response to high dietary fructose intake. The polypeptide is Solute carrier family 2, facilitated glucose transporter member 5 (Ovis aries (Sheep)).